We begin with the raw amino-acid sequence, 384 residues long: Viral protein 1 (384 aa).

The chain is Viral protein 1 from Chaetoceros setoense (Chaetoceros setoense DNA virus).